Reading from the N-terminus, the 176-residue chain is Protein MOTHER of FT and TFL1 homolog 1 (176 aa).

Belongs to the phosphatidylethanolamine-binding protein family.

In terms of biological role, may form complexes with phosphorylated ligands by interfering with kinases and their effectors. The chain is Protein MOTHER of FT and TFL1 homolog 1 from Oryza sativa subsp. japonica (Rice).